Here is a 359-residue protein sequence, read N- to C-terminus: Peroxisome assembly protein 12 (359 aa).

Residues 1-19 (MAEHGAHITTASVADDQPS) are Peroxisomal matrix-facing. Residues 20 to 47 (IFEVVAQDSLMTAVRPALQHVVKVLAES) traverse the membrane as a helical segment. Residues 48 to 51 (NPAH) are Cytoplasmic-facing. A helical transmembrane segment spans residues 52 to 76 (YGFFWRWFDEIFTLLDFLLQQHYLS). At 77-109 (RTSASFSEHFYGLKRIVAGSSPQLQRPASAGLP) the chain is on the peroxisomal matrix side. The helical transmembrane segment at 110–139 (KEHLWKSAMFLVLLPYLKVKLEKLASTLRE) threads the bilayer. Residues 140–144 (EDEYS) lie on the Cytoplasmic side of the membrane. Residues 145-183 (IHPPSSHWKRFYRVFLAAYPFVTMTWEGWFLTQQLRYIL) form a helical membrane-spanning segment. Residues 184-249 (GKAEHHSPLL…VGGVALSLST (66 aa)) are Peroxisomal matrix-facing. The helical transmembrane segment at 250–277 (GLSVGVFFLQFLDWWYSSENQETIKSLT) threads the bilayer. At 278–359 (ALPTPPPPVH…HLIKLYSPEN (82 aa)) the chain is on the cytoplasmic side. Cys-304, Cys-307, Cys-325, and Cys-328 together coordinate Zn(2+). The RING-type; degenerate zinc-finger motif lies at 304–343 (CPLCRKARVNDTVLATSGYVFCYRCVFNYVRSHQACPITG).

Belongs to the pex2/pex10/pex12 family. In terms of assembly, component of the PEX2-PEX10-PEX12 retrotranslocation channel, composed of PEX2, PEX10 and PEX12. Interacts with PEX19 via its cytoplasmic domain.

It localises to the peroxisome membrane. It functions in the pathway protein modification; protein ubiquitination. Its function is as follows. Component of a retrotranslocation channel required for peroxisome organization by mediating export of the PEX5 receptor from peroxisomes to the cytosol, thereby promoting PEX5 recycling. The retrotranslocation channel is composed of PEX2, PEX10 and PEX12; each subunit contributing transmembrane segments that coassemble into an open channel that specifically allows the passage of PEX5 through the peroxisomal membrane. PEX12 also regulates PEX5 recycling by activating the E3 ubiquitin-protein ligase activity of PEX10. When PEX5 recycling is compromised, PEX12 stimulates PEX10-mediated polyubiquitination of PEX5, leading to its subsequent degradation. The chain is Peroxisome assembly protein 12 (Pex12) from Rattus norvegicus (Rat).